A 171-amino-acid chain; its full sequence is Endoribonuclease YbeY (171 aa).

3 residues coordinate Zn(2+): His-130, His-134, and His-140.

Belongs to the endoribonuclease YbeY family. Zn(2+) serves as cofactor.

The protein resides in the cytoplasm. Functionally, single strand-specific metallo-endoribonuclease involved in late-stage 70S ribosome quality control and in maturation of the 3' terminus of the 16S rRNA. This is Endoribonuclease YbeY from Neisseria gonorrhoeae (strain ATCC 700825 / FA 1090).